The following is a 548-amino-acid chain: Adenine deaminase (548 aa).

It belongs to the metallo-dependent hydrolases superfamily. Adenine deaminase family. Mn(2+) is required as a cofactor.

It carries out the reaction adenine + H2O + H(+) = hypoxanthine + NH4(+). The chain is Adenine deaminase from Borreliella afzelii (strain PKo) (Borrelia afzelii).